The sequence spans 72 residues: U-actitoxin-Aeq5b (72 aa).

A signal peptide spans 1-20; it reads MNQVMTIFLVLGVIVYSVES. 4 cysteine pairs are disulfide-bonded: C33–C71, C37–C66, C44–C59, and C50–C56.

The protein belongs to the Acrorhagin I family. Expressed by acrorhagi.

It localises to the secreted. It is found in the nematocyst. Toxin that is lethal to crab. It interacts with divalent metal ions (zinc and nickel) suggesting it may function as a metal ion chelator to regulate metal ion levels or as a metal ion transporter, or that its function is modulated by metal ions. Is not active against any of the voltage-gated potassium and sodium channels tested. In addition, it does not show activity in bacterial and fungal growth inhibitory assays as well as in hemolytic assays. The polypeptide is U-actitoxin-Aeq5b (Actinia equina (Beadlet anemone)).